The following is a 338-amino-acid chain: tRNA N6-adenosine threonylcarbamoyltransferase (338 aa).

Fe cation contacts are provided by H111 and H115. Substrate is bound by residues L134–G138, D167, G180, and N272. Position 300 (D300) interacts with Fe cation.

This sequence belongs to the KAE1 / TsaD family. The cofactor is Fe(2+).

It is found in the cytoplasm. The enzyme catalyses L-threonylcarbamoyladenylate + adenosine(37) in tRNA = N(6)-L-threonylcarbamoyladenosine(37) in tRNA + AMP + H(+). Its function is as follows. Required for the formation of a threonylcarbamoyl group on adenosine at position 37 (t(6)A37) in tRNAs that read codons beginning with adenine. Is involved in the transfer of the threonylcarbamoyl moiety of threonylcarbamoyl-AMP (TC-AMP) to the N6 group of A37, together with TsaE and TsaB. TsaD likely plays a direct catalytic role in this reaction. This chain is tRNA N6-adenosine threonylcarbamoyltransferase, found in Aliivibrio salmonicida (strain LFI1238) (Vibrio salmonicida (strain LFI1238)).